We begin with the raw amino-acid sequence, 505 residues long: Maturase K (505 aa).

Belongs to the intron maturase 2 family. MatK subfamily.

Its subcellular location is the plastid. The protein resides in the chloroplast. In terms of biological role, usually encoded in the trnK tRNA gene intron. Probably assists in splicing its own and other chloroplast group II introns. This is Maturase K from Allamanda cathartica (Yellow allamanda).